The sequence spans 261 residues: MWFLILFLALSLGGIDAAPPVQSRIFGGFNCEKNSQPWQVAVYRFTKYQCGGVLLNANWVLTAAHCHNDKYQVWLGKNNFFEDEPSAQHRLVSKAIPHPDFNMSLLNEHTPQPEDDYSNDLMLLRLKKPADITDVVKPIDLPTEEPKLGSTCLASGWGSITPVIYEPADDLQCVNFKLLPNEDCVKAHIEKVTDVMLCAGDMDGGKDTCMGDSGGPLICDGVLHGITSWGPSPCGKPNVPGIYTKLIKFNSWIKDTIAKNA.

The first 18 residues, 1-18 (MWFLILFLALSLGGIDAA), serve as a signal peptide directing secretion. A propeptide spans 19-24 (PPVQSR) (activation peptide). Residues 25–258 (IFGGFNCEKN…FNSWIKDTIA (234 aa)) form the Peptidase S1 domain. 5 disulfides stabilise this stretch: Cys-31-Cys-173, Cys-50-Cys-66, Cys-152-Cys-219, Cys-184-Cys-198, and Cys-209-Cys-234. His-65 acts as the Charge relay system in catalysis. Asn-102 is a glycosylation site (N-linked (GlcNAc...) asparagine). The Charge relay system role is filled by Asp-120. Ser-213 (charge relay system) is an active-site residue.

Belongs to the peptidase S1 family. Kallikrein subfamily.

It catalyses the reaction Preferential cleavage of Arg-|-Xaa bonds in small molecule substrates. Highly selective action to release kallidin (lysyl-bradykinin) from kininogen involves hydrolysis of Met-|-Xaa or Leu-|-Xaa.. Glandular kallikreins cleave Met-Lys and Arg-Ser bonds in kininogen to release Lys-bradykinin. This chain is Kallikrein 1-related peptidase b5 (Klk1b5), found in Mus musculus (Mouse).